The chain runs to 177 residues: Large ribosomal subunit protein uL6 (177 aa).

Belongs to the universal ribosomal protein uL6 family. In terms of assembly, part of the 50S ribosomal subunit.

Its function is as follows. This protein binds to the 23S rRNA, and is important in its secondary structure. It is located near the subunit interface in the base of the L7/L12 stalk, and near the tRNA binding site of the peptidyltransferase center. In Stutzerimonas stutzeri (strain A1501) (Pseudomonas stutzeri), this protein is Large ribosomal subunit protein uL6.